The primary structure comprises 90 residues: U7-theraphotoxin-Hhn1a 8 (90 aa).

Positions M1–S19 are cleaved as a signal peptide. Residues F20–E50 constitute a propeptide that is removed on maturation. Cystine bridges form between C51/C65, C58/C70, and C64/C81.

It belongs to the neurotoxin 10 (Hwtx-1) family. 13 (Hntx-13) subfamily. In terms of tissue distribution, expressed by the venom gland.

It is found in the secreted. Functionally, ion channel inhibitor. The protein is U7-theraphotoxin-Hhn1a 8 of Cyriopagopus hainanus (Chinese bird spider).